A 198-amino-acid polypeptide reads, in one-letter code: Small ribosomal subunit protein uS4z (198 aa).

The residue at position 68 (S68) is a Phosphoserine. The S4 RNA-binding domain occupies 109-180; the sequence is RRLQTIVFKS…PGRVKRRNEK (72 aa). Positions 163-198 are disordered; the sequence is TSPFGGGRPGRVKRRNEKSASKKASGGGDADGDDEE.

This sequence belongs to the universal ribosomal protein uS4 family. In terms of assembly, binds to the translation initiation factors TIF3E1.

The polypeptide is Small ribosomal subunit protein uS4z (RPS9B) (Arabidopsis thaliana (Mouse-ear cress)).